An 810-amino-acid polypeptide reads, in one-letter code: Calpain-3 (810 aa).

Over residues 9-27 (VAQQTAAGSVPSTTSTTTE) the composition is skewed to low complexity. The segment at 9-31 (VAQQTAAGSVPSTTSTTTEGTGG) is disordered. The 343-residue stretch at 68–410 (LYEDPDFPPN…FTKLEICNLT (343 aa)) folds into the Calpain catalytic domain. Active-site residues include C123, H327, and N351. Positions 411–579 (PDTLEADKLQ…KRSLSEEVEN (169 aa)) are domain III. A disordered region spans residues 578 to 639 (ENMIEADRPS…SAKAREKSEE (62 aa)). Residues 580–638 (MIEADRPSKKKKGKPIIFVSDRANSNKELTTDEDAGKDGEKTHVDEKKRSSAKAREKSE) are linker. The segment covering 613–639 (DAGKDGEKTHVDEKKRSSAKAREKSEE) has biased composition (basic and acidic residues). EF-hand domains lie at 638–672 (EEETQFRNIFRQIAGDDMEICREELRNVLNNVVKK), 681–714 (FELESSRSMIALMDTDGSGKINFDEFRHLWDKIK), 711–746 (DKIKSWQKIFKHYDADHSGTINSYEMRNAVKDAGFR), and 776–810 (VRLDAMFRAFHAFDKDGDGIIKLNVLEWLQLTMYA). The interval 639–809 (EETQFRNIFR…VLEWLQLTMY (171 aa)) is domain IV. The Ca(2+) site is built by A651, D654, E656, E661, D694, D696, S698, K700, E705, D724, D726, S728, T730, E735, D789, D791, D793, and I795.

This sequence belongs to the peptidase C2 family. In terms of assembly, homodimer; via EF-hand domain 4. Interacts with TTN/titin. Interacts with CMYA5; this interaction, which results in CMYA5 proteolysis, may protect CAPN3 from autolysis. Interacts with SIMC1. Interacts with UTP25; the interaction is required for CAPN3 translocation to the nucleolus. As to expression, skeletal muscle. Low levels in spleen, intestine and bone.

It is found in the cytoplasm. The protein resides in the nucleus. Its subcellular location is the nucleolus. It carries out the reaction Broad endopeptidase activity.. Activated by micromolar concentrations of calcium and inhibited by calpastatin. Functionally, calcium-regulated non-lysosomal thiol-protease. Proteolytically cleaves CTBP1. Mediates, with UTP25, the proteasome-independent degradation of p53/TP53. This chain is Calpain-3 (CAPN3), found in Gallus gallus (Chicken).